Here is an 88-residue protein sequence, read N- to C-terminus: uncharacterized protein (88 aa).

Positions 1-31 (MIPRDPRSPAPDLSAINQPAGRAERRSGPAT) are disordered.

This is an uncharacterized protein from Escherichia coli.